The primary structure comprises 380 residues: Chaperone protein DnaJ (380 aa).

The J domain occupies 4-69 (DYYEILGVTR…QKRAAYDRFG (66 aa)). Residues 135 to 213 (GKTAQINIPS…CQGTRRVEKN (79 aa)) form a CR-type zinc finger. The Zn(2+) site is built by C148, C151, C165, C168, C187, C190, C201, and C204. CXXCXGXG motif repeat units follow at residues 148 to 155 (CDSCEGSG), 165 to 172 (CGTCHGAG), 187 to 194 (CHACNGRG), and 201 to 208 (CPKCQGTR).

It belongs to the DnaJ family. In terms of assembly, homodimer. The cofactor is Zn(2+).

It is found in the cytoplasm. Participates actively in the response to hyperosmotic and heat shock by preventing the aggregation of stress-denatured proteins and by disaggregating proteins, also in an autonomous, DnaK-independent fashion. Unfolded proteins bind initially to DnaJ; upon interaction with the DnaJ-bound protein, DnaK hydrolyzes its bound ATP, resulting in the formation of a stable complex. GrpE releases ADP from DnaK; ATP binding to DnaK triggers the release of the substrate protein, thus completing the reaction cycle. Several rounds of ATP-dependent interactions between DnaJ, DnaK and GrpE are required for fully efficient folding. Also involved, together with DnaK and GrpE, in the DNA replication of plasmids through activation of initiation proteins. The protein is Chaperone protein DnaJ of Bartonella quintana (strain Toulouse) (Rochalimaea quintana).